Reading from the N-terminus, the 159-residue chain is NADH-quinone oxidoreductase subunit I (159 aa).

4Fe-4S ferredoxin-type domains follow at residues 51-80 (RRYENGEERCIACKLCEAICPAQAIVIEAD) and 90-119 (TRYDIDMTKCIYCGLCQAACPVDAIVEGPN). Residues cysteine 60, cysteine 63, cysteine 66, cysteine 70, cysteine 99, cysteine 102, cysteine 105, and cysteine 109 each contribute to the [4Fe-4S] cluster site.

It belongs to the complex I 23 kDa subunit family. NDH-1 is composed of 14 different subunits. Subunits NuoA, H, J, K, L, M, N constitute the membrane sector of the complex. The cofactor is [4Fe-4S] cluster.

Its subcellular location is the cell inner membrane. It catalyses the reaction a quinone + NADH + 5 H(+)(in) = a quinol + NAD(+) + 4 H(+)(out). Its function is as follows. NDH-1 shuttles electrons from NADH, via FMN and iron-sulfur (Fe-S) centers, to quinones in the respiratory chain. The immediate electron acceptor for the enzyme in this species is believed to be ubiquinone. Couples the redox reaction to proton translocation (for every two electrons transferred, four hydrogen ions are translocated across the cytoplasmic membrane), and thus conserves the redox energy in a proton gradient. In Rickettsia massiliae (strain Mtu5), this protein is NADH-quinone oxidoreductase subunit I.